A 385-amino-acid chain; its full sequence is Serpin-Z10 (385 aa).

Residues 333–357 (GTEAAAVSVGVVSCTSFRRNPDFVA) are RCL.

Belongs to the serpin family.

Functionally, probable serine protease inhibitor. The polypeptide is Serpin-Z10 (Arabidopsis thaliana (Mouse-ear cress)).